Here is a 164-residue protein sequence, read N- to C-terminus: Lipoprotein signal peptidase (164 aa).

Transmembrane regions (helical) follow at residues 11–31, 41–61, 64–84, and 92–112; these read YWVLALAAIVLDQWSKWAVLS, VIPSFFDLTLVYNPGAAFSFL, QGGWQKYFFLVLAVAVSAYLV, and FATLGKTGAAMIIGGALGNVI. Residues Asp122 and Asp140 contribute to the active site. A helical transmembrane segment spans residues 132-152; it reads FYPAFNIADSFICVGAVLAVL.

This sequence belongs to the peptidase A8 family.

The protein resides in the cell inner membrane. It catalyses the reaction Release of signal peptides from bacterial membrane prolipoproteins. Hydrolyzes -Xaa-Yaa-Zaa-|-(S,diacylglyceryl)Cys-, in which Xaa is hydrophobic (preferably Leu), and Yaa (Ala or Ser) and Zaa (Gly or Ala) have small, neutral side chains.. It functions in the pathway protein modification; lipoprotein biosynthesis (signal peptide cleavage). This protein specifically catalyzes the removal of signal peptides from prolipoproteins. The polypeptide is Lipoprotein signal peptidase (Neisseria meningitidis serogroup C (strain 053442)).